Consider the following 274-residue polypeptide: Large ribosomal subunit protein uL2 (274 aa).

Positions 195–274 are disordered; sequence VGNSDHGLES…SKYIIERRKK (80 aa). Composition is skewed to basic residues over residues 209–220 and 244–264; these read GRSRWQGRRPRN and PRSRKGLYAKGLKTRAPKKQS.

This sequence belongs to the universal ribosomal protein uL2 family. As to quaternary structure, part of the 50S ribosomal subunit. Forms a bridge to the 30S subunit in the 70S ribosome.

Its function is as follows. One of the primary rRNA binding proteins. Required for association of the 30S and 50S subunits to form the 70S ribosome, for tRNA binding and peptide bond formation. It has been suggested to have peptidyltransferase activity; this is somewhat controversial. Makes several contacts with the 16S rRNA in the 70S ribosome. The chain is Large ribosomal subunit protein uL2 from Bacteroides fragilis (strain ATCC 25285 / DSM 2151 / CCUG 4856 / JCM 11019 / LMG 10263 / NCTC 9343 / Onslow / VPI 2553 / EN-2).